A 454-amino-acid polypeptide reads, in one-letter code: Trichosetin biosynthesis cluster transcription factor TF22 (454 aa).

Positions 13 to 47 form a DNA-binding region, zn(2)-C6 fungal-type; that stretch reads CDRCRSHKLKCTVSPEDSRSGPHKCTRCIRAQVTC. A disordered region spans residues 51–89; that stretch reads PRSQSKRTPNGKNKPEKPKPELEPPQKTSPPVCSSSLAG. Over residues 52–61 the composition is skewed to polar residues; the sequence is RSQSKRTPNG. Residues 63-74 show a composition bias toward basic and acidic residues; that stretch reads NKPEKPKPELEP.

The protein resides in the nucleus. In terms of biological role, transcription factor that regulates the expression of the gene cluster that mediates the biosynthesis of trichosetin, a trans-fused decalin-containing tetramic acid with antimicrobial activity. Directly activates expression of only the three biosynthetic genes PKS-NRPS1, DA and ER, while TF23 and MFS-T are induced by the final product trichosetin and not by TF22. The sequence is that of Trichosetin biosynthesis cluster transcription factor TF22 from Gibberella fujikuroi (strain CBS 195.34 / IMI 58289 / NRRL A-6831) (Bakanae and foot rot disease fungus).